The primary structure comprises 214 residues: Adenylate kinase (214 aa).

Position 10–15 (10–15) interacts with ATP; sequence GAGKGT. The interval 30–59 is NMP; it reads STGDMLRAAVKAGTPLGLEAKKVMDAGQLV. Residues threonine 31, arginine 36, 57-59, 85-88, and glutamine 92 each bind AMP; these read QLV and GFPR. An LID region spans residues 122-159; sequence GRRVHSGSGRVYHVVFNPPKVEGKDDVTGEDLSIRPDD. ATP-binding positions include arginine 123 and 132–133; that span reads VY. AMP-binding residues include arginine 156 and arginine 167. Residue glutamine 200 participates in ATP binding.

It belongs to the adenylate kinase family. As to quaternary structure, monomer.

It localises to the cytoplasm. It catalyses the reaction AMP + ATP = 2 ADP. The protein operates within purine metabolism; AMP biosynthesis via salvage pathway; AMP from ADP: step 1/1. Catalyzes the reversible transfer of the terminal phosphate group between ATP and AMP. Plays an important role in cellular energy homeostasis and in adenine nucleotide metabolism. The chain is Adenylate kinase from Shewanella denitrificans (strain OS217 / ATCC BAA-1090 / DSM 15013).